Here is a 181-residue protein sequence, read N- to C-terminus: Early E3 20.3 kDa glycoprotein (181 aa).

N-linked (GlcNAc...) asparagine; by host glycosylation is found at asparagine 29, asparagine 57, asparagine 70, and asparagine 75.

Belongs to the adenoviridae E3_20 family.

Its function is as follows. E3 proteins seem to be dispensable for virus growth in tissue culture cells. They are potentially important for virus growth under special conditions; E3 region may help adenoviruses to evade the immune surveillance of the host. In Homo sapiens (Human), this protein is Early E3 20.3 kDa glycoprotein.